The chain runs to 562 residues: Protein KASH5 (562 aa).

The Cytoplasmic portion of the chain corresponds to 1 to 521 (MDLPEGPVGG…PQRLRVTRHP (521 aa)). The tract at residues 125–153 (ALTSRQLPSGCPEAEEPANLESFGGEDPR) is disordered. Residues 164–349 (SSLEDLELSN…LEEQLSQTYE (186 aa)) are a coiled coil. The interval 407-481 (ETSEETEFPS…DIPENPPERP (75 aa)) is disordered. Positions 431–448 (AHPEEGRKEPSMWLTRRE) are enriched in basic and acidic residues. Residues 522–542 (LIPAPVLGLLLLLLLSVLLLG) traverse the membrane as a helical; Anchor for type IV membrane protein segment. An interaction with SUN1 region spans residues 541-562 (LGPSPPPTWPHLQLCYLQPPPV). The Perinuclear space portion of the chain corresponds to 543–562 (PSPPPTWPHLQLCYLQPPPV).

Core component the LINC complex which is composed of inner nuclear membrane SUN domain-containing proteins coupled to outer nuclear membrane KASH domain-containing nesprins. SUN and KASH domain-containing proteins seem to bind each other promiscuously; however, differentially expression of LINC complex constituents is giving rise to specific assemblies. At least SUN1/2-containing core LINC complexes are proposed to be hexameric composed of three protomers of each KASH and SUN domain-containing protein. Interacts with SUN1; this interaction mediates its telomere localization by forming a SUN1:KASH5 LINC complex. Component of a probable SUN2:KASH5 LINC complex. Self-associates. Interacts with DYNC1H1, DCTN1, DYNC1I1/2 and PAFAH1B1; suggesting the association with the dynein-dynactin motor complex. As to expression, expressed in testis (at protein level).

The protein resides in the nucleus outer membrane. It is found in the nucleus. It localises to the chromosome. The protein localises to the telomere. Its subcellular location is the nucleus envelope. As a component of the LINC (LInker of Nucleoskeleton and Cytoskeleton) complex, involved in the connection between the nuclear lamina and the cytoskeleton. The nucleocytoplasmic interactions established by the LINC complex play an important role in the transmission of mechanical forces across the nuclear envelope and in nuclear movement and positioning. Required for telomere attachment to nuclear envelope in the prophase of meiosis. Required for rapid telomere prophase movements implicating a SUN1/2:KASH5 LINC complex in which SUN1 and SUN2 seem to act at least partial redundantly. Required for homolog pairing during meiotic prophase in spermatocytes and probably oocytes. Essential for male and female gametogenesis. Recruits cytoplasmic dynein to telomere attachment sites at the nuclear envelope in spermatocytes. In oocytes is involved in meiotic resumption and spindle formation. The protein is Protein KASH5 of Homo sapiens (Human).